The chain runs to 852 residues: Protein SEY1 (852 aa).

Residues 1 to 738 (MNGHFAAIGN…KRSAIGGITQ (738 aa)) are Cytoplasmic-facing. Residues 47–294 (GFNYHLISVF…IPADGLSVYA (248 aa)) form the GB1/RHD3-type G domain. Residue 57–64 (GSQSTGKS) coordinates GTP. Residues 475–500 (QYKLFEKELDEVSARLRKEEMRRLAI) are a coiled coil. The chain crosses the membrane as a helical span at residues 739 to 759 (VPLYFYVILLILGWNEILMVL). Residues 760-762 (RNP) lie on the Lumenal side of the membrane. Residues 763–783 (FLILLILVMGGGTYIAYSLNL) form a helical membrane-spanning segment. Topologically, residues 784–852 (LGPMMQMSNA…AQDISDDDDI (69 aa)) are cytoplasmic.

This sequence belongs to the TRAFAC class dynamin-like GTPase superfamily. GB1/RHD3 GTPase family. RHD3 subfamily.

It localises to the endoplasmic reticulum membrane. Its function is as follows. Cooperates with the reticulon proteins and tubule-shaping DP1 family proteins to generate and maintain the structure of the tubular endoplasmic reticulum network. Has GTPase activity, which is required for its function in ER organization. The protein is Protein SEY1 of Podospora anserina (strain S / ATCC MYA-4624 / DSM 980 / FGSC 10383) (Pleurage anserina).